A 446-amino-acid polypeptide reads, in one-letter code: Vacuolar cation/proton exchanger 4 (446 aa).

The segment covering 1–16 has biased composition (low complexity); it reads MSSISTESSSNLSLLE. The interval 1 to 33 is disordered; the sequence is MSSISTESSSNLSLLENGGGGSDKPTAETSRRV. Residues 1-69 lie on the Cytoplasmic side of the membrane; the sequence is MSSISTESSS…MRRILTNLQE (69 aa). Residues 70-90 traverse the membrane as a helical segment; it reads VLLGTKLFILFPAVPLAVVAH. Over 91–96 the chain is Extracellular; sequence RYDCPR. A helical transmembrane segment spans residues 97–117; the sequence is AWVFALSLLGLTPLAERISFL. Over 118 to 128 the chain is Cytoplasmic; sequence TEQIAFHTGPT. A helical membrane pass occupies residues 129–149; sequence VGGLMNATCGNATEMIIAILA. A cation selection region spans residues 138-173; that stretch reads GNATEMIIAILAVGQRKMRIVKLSLLGSILSNLLFV. Over 150–162 the chain is Extracellular; the sequence is VGQRKMRIVKLSL. Residues 163 to 183 form a helical membrane-spanning segment; it reads LGSILSNLLFVLGTSLFLGGI. Residues 184-196 are Cytoplasmic-facing; that stretch reads SNLRKHQSFDPRQ. The chain crosses the membrane as a helical span at residues 197-217; it reads GDMNSMLLYLALLCQTLPMIM. Over 218–238 the chain is Extracellular; that stretch reads RFTMEAEEYDGSDVVVLSRAS. A helical membrane pass occupies residues 239-259; the sequence is SFVMLIAYLAFLIFHLFSSHL. The Cytoplasmic segment spans residues 260–285; that stretch reads SPPPPPLPQREDVHDDDVSDKEEEGA. The chain crosses the membrane as a helical span at residues 286–306; sequence VIGMWSAIFWLIIMTLLVALL. At 307–319 the chain is on the extracellular side; it reads SDYLVSTIQDAAD. A helical membrane pass occupies residues 320–340; it reads SWGLSVGFIGIILLPIVGNAA. Positions 337 to 372 are cation selection; sequence GNAAEHAGAVIFAFRNKLDITLGIALGSATQIALFV. Residues 341–359 lie on the Cytoplasmic side of the membrane; that stretch reads EHAGAVIFAFRNKLDITLG. A helical membrane pass occupies residues 360–380; sequence IALGSATQIALFVVPVTVLVA. Residues 381–388 are Extracellular-facing; that stretch reads WTMGIEMD. A helical membrane pass occupies residues 389–409; it reads LNFNLLETACFALSILVTSLV. Residues 410 to 416 are Cytoplasmic-facing; sequence LQDGTSN. Residues 417-437 form a helical membrane-spanning segment; the sequence is YMKGLVLLLCYVVIAACFFVS. The Extracellular segment spans residues 438 to 446; that stretch reads NSPSSKLLF.

The protein belongs to the Ca(2+):cation antiporter (CaCA) (TC 2.A.19) family. Cation/proton exchanger (CAX) subfamily. In terms of tissue distribution, expressed at low levels in all tissues.

It localises to the vacuole membrane. In terms of biological role, vacuolar cation/proton exchanger (CAX). Translocates Ca(2+) and other metal ions into vacuoles using the proton gradient formed by H(+)-ATPase and H(+)-pyrophosphatase. Cation selectivity transport in tobacco root tonoplast vesicles is Cd(2+)&gt;Zn(2+)&gt;&gt;Ca(2+)&gt;&gt;&gt;Mn(2+). In Arabidopsis thaliana (Mouse-ear cress), this protein is Vacuolar cation/proton exchanger 4 (CAX4).